The chain runs to 330 residues: Glycerol-3-phosphate dehydrogenase [NAD(P)+] (330 aa).

4 residues coordinate NADPH: S10, W11, R31, and K105. Sn-glycerol 3-phosphate is bound by residues K105, G135, and S137. A139 provides a ligand contact to NADPH. Sn-glycerol 3-phosphate-binding residues include K190, D243, S253, R254, and N255. K190 acts as the Proton acceptor in catalysis. Residue R254 participates in NADPH binding. Residues V278 and E280 each contribute to the NADPH site.

The protein belongs to the NAD-dependent glycerol-3-phosphate dehydrogenase family.

The protein localises to the cytoplasm. The catalysed reaction is sn-glycerol 3-phosphate + NAD(+) = dihydroxyacetone phosphate + NADH + H(+). It carries out the reaction sn-glycerol 3-phosphate + NADP(+) = dihydroxyacetone phosphate + NADPH + H(+). It functions in the pathway membrane lipid metabolism; glycerophospholipid metabolism. In terms of biological role, catalyzes the reduction of the glycolytic intermediate dihydroxyacetone phosphate (DHAP) to sn-glycerol 3-phosphate (G3P), the key precursor for phospholipid synthesis. The polypeptide is Glycerol-3-phosphate dehydrogenase [NAD(P)+] (Solidesulfovibrio magneticus (strain ATCC 700980 / DSM 13731 / RS-1) (Desulfovibrio magneticus)).